The sequence spans 170 residues: Endoribonuclease YbeY (170 aa).

Zn(2+) is bound by residues histidine 128, histidine 132, and histidine 138.

This sequence belongs to the endoribonuclease YbeY family. The cofactor is Zn(2+).

It is found in the cytoplasm. Its function is as follows. Single strand-specific metallo-endoribonuclease involved in late-stage 70S ribosome quality control and in maturation of the 3' terminus of the 16S rRNA. This is Endoribonuclease YbeY from Ruegeria sp. (strain TM1040) (Silicibacter sp.).